The primary structure comprises 376 residues: Phytanoyl-CoA hydroxylase-interacting protein-like (376 aa).

The Fibronectin type-III domain maps to 52 to 161; that stretch reads VPHNIKISNI…EIIEFCTADY (110 aa).

The protein belongs to the PHYHIP family.

May play a role in the development of the central system. The sequence is that of Phytanoyl-CoA hydroxylase-interacting protein-like (phyhipl) from Xenopus laevis (African clawed frog).